Reading from the N-terminus, the 344-residue chain is Dihydroorotase (344 aa).

Positions 13 and 15 each coordinate Zn(2+). Residues 15 to 17 (HFR) and Asn-41 each bind substrate. Residues Lys-98, His-135, and His-173 each coordinate Zn(2+). Lys-98 is subject to N6-carboxylysine. Position 135 (His-135) interacts with substrate. Residue Leu-218 coordinates substrate. Asp-246 is a Zn(2+) binding site. The active site involves Asp-246. Residues His-250 and Ala-262 each contribute to the substrate site.

It belongs to the metallo-dependent hydrolases superfamily. DHOase family. Class II DHOase subfamily. Homodimer. Zn(2+) serves as cofactor.

It catalyses the reaction (S)-dihydroorotate + H2O = N-carbamoyl-L-aspartate + H(+). It participates in pyrimidine metabolism; UMP biosynthesis via de novo pathway; (S)-dihydroorotate from bicarbonate: step 3/3. In terms of biological role, catalyzes the reversible cyclization of carbamoyl aspartate to dihydroorotate. The polypeptide is Dihydroorotase (Pseudoalteromonas atlantica (strain T6c / ATCC BAA-1087)).